Here is a 454-residue protein sequence, read N- to C-terminus: Bifunctional protein GlmU (454 aa).

A pyrophosphorylase region spans residues 1–227 (MTQLSVVILA…FMEVEGANNR (227 aa)). UDP-N-acetyl-alpha-D-glucosamine is bound by residues 9 to 12 (LAAG), K23, Q74, 79 to 80 (GT), 101 to 103 (YGD), G138, E152, N167, and N225. A Mg(2+)-binding site is contributed by D103. N225 is a Mg(2+) binding site. The interval 228–248 (LQLAALERFYQKTQAEKLLLA) is linker. Positions 249–454 (GVRLIDQARF…QGWQRPTKKK (206 aa)) are N-acetyltransferase. Residues R331 and K349 each coordinate UDP-N-acetyl-alpha-D-glucosamine. Catalysis depends on H361, which acts as the Proton acceptor. 2 residues coordinate UDP-N-acetyl-alpha-D-glucosamine: Y364 and N375. Residues A378, 384 to 385 (NY), S403, A421, and R438 contribute to the acetyl-CoA site.

It in the N-terminal section; belongs to the N-acetylglucosamine-1-phosphate uridyltransferase family. The protein in the C-terminal section; belongs to the transferase hexapeptide repeat family. Homotrimer. Mg(2+) is required as a cofactor.

The protein localises to the cytoplasm. It catalyses the reaction alpha-D-glucosamine 1-phosphate + acetyl-CoA = N-acetyl-alpha-D-glucosamine 1-phosphate + CoA + H(+). The catalysed reaction is N-acetyl-alpha-D-glucosamine 1-phosphate + UTP + H(+) = UDP-N-acetyl-alpha-D-glucosamine + diphosphate. Its pathway is nucleotide-sugar biosynthesis; UDP-N-acetyl-alpha-D-glucosamine biosynthesis; N-acetyl-alpha-D-glucosamine 1-phosphate from alpha-D-glucosamine 6-phosphate (route II): step 2/2. The protein operates within nucleotide-sugar biosynthesis; UDP-N-acetyl-alpha-D-glucosamine biosynthesis; UDP-N-acetyl-alpha-D-glucosamine from N-acetyl-alpha-D-glucosamine 1-phosphate: step 1/1. It functions in the pathway bacterial outer membrane biogenesis; LPS lipid A biosynthesis. Its function is as follows. Catalyzes the last two sequential reactions in the de novo biosynthetic pathway for UDP-N-acetylglucosamine (UDP-GlcNAc). The C-terminal domain catalyzes the transfer of acetyl group from acetyl coenzyme A to glucosamine-1-phosphate (GlcN-1-P) to produce N-acetylglucosamine-1-phosphate (GlcNAc-1-P), which is converted into UDP-GlcNAc by the transfer of uridine 5-monophosphate (from uridine 5-triphosphate), a reaction catalyzed by the N-terminal domain. The chain is Bifunctional protein GlmU from Actinobacillus pleuropneumoniae serotype 7 (strain AP76).